We begin with the raw amino-acid sequence, 229 residues long: Peptidase E (229 aa).

Residues Ser-120, Asp-135, and His-157 each act as charge relay system in the active site.

Belongs to the peptidase S51 family.

The protein resides in the cytoplasm. The enzyme catalyses Dipeptidase E catalyzes the hydrolysis of dipeptides Asp-|-Xaa. It does not act on peptides with N-terminal Glu, Asn or Gln, nor does it cleave isoaspartyl peptides.. Its function is as follows. Hydrolyzes dipeptides containing N-terminal aspartate residues. May play a role in allowing the cell to use peptide aspartate to spare carbon otherwise required for the synthesis of the aspartate family of amino acids. This chain is Peptidase E, found in Salmonella newport (strain SL254).